The chain runs to 179 residues: Large ribosomal subunit protein uL5 (179 aa).

The protein belongs to the universal ribosomal protein uL5 family. Part of the 50S ribosomal subunit; part of the 5S rRNA/L5/L18/L25 subcomplex. Contacts the 5S rRNA and the P site tRNA. Forms a bridge to the 30S subunit in the 70S ribosome.

Functionally, this is one of the proteins that bind and probably mediate the attachment of the 5S RNA into the large ribosomal subunit, where it forms part of the central protuberance. In the 70S ribosome it contacts protein S13 of the 30S subunit (bridge B1b), connecting the 2 subunits; this bridge is implicated in subunit movement. Contacts the P site tRNA; the 5S rRNA and some of its associated proteins might help stabilize positioning of ribosome-bound tRNAs. The chain is Large ribosomal subunit protein uL5 from Erwinia tasmaniensis (strain DSM 17950 / CFBP 7177 / CIP 109463 / NCPPB 4357 / Et1/99).